Consider the following 577-residue polypeptide: Protein NRT1/ PTR FAMILY 6.2 (577 aa).

The next 12 helical transmembrane spans lie at 28-48, 74-94, 96-116, 134-154, 183-203, 214-234, 332-352, 369-389, 409-429, 447-467, 488-508, and 535-555; these read WITA…TMGI, FMGT…SFLG, FKTI…LAVA, IPAT…IALG, FFFN…VTVL, WAYG…LCGT, LLPI…MITF, IPAG…LAVY, LQRI…AALV, ISVF…AFIY, GLFL…VSIV, and WLLV…ALWF.

This sequence belongs to the major facilitator superfamily. Proton-dependent oligopeptide transporter (POT/PTR) (TC 2.A.17) family. In terms of tissue distribution, expressed in shoots, leaves, flowers and siliques. Expressed in leaf petiole.

The protein localises to the membrane. In terms of biological role, low-affinity proton-dependent nitrate transporter. Not involved in dipeptides transport. In Arabidopsis thaliana (Mouse-ear cress), this protein is Protein NRT1/ PTR FAMILY 6.2 (NPF6.2).